The sequence spans 238 residues: Nucleoside diphosphate kinase III, chloroplastic/mitochondrial (238 aa).

A chloroplast and mitochondrion-targeting transit peptide spans 1–85; the sequence is MSSQICRSAS…YMIQDQEVLA (85 aa). Positions 96, 144, 172, 178, 189, and 199 each coordinate ATP. His202 functions as the Pros-phosphohistidine intermediate in the catalytic mechanism.

This sequence belongs to the NDK family. As to quaternary structure, homohexamer. It depends on Mg(2+) as a cofactor.

It localises to the plastid. The protein localises to the chloroplast thylakoid lumen. The protein resides in the mitochondrion intermembrane space. It carries out the reaction a 2'-deoxyribonucleoside 5'-diphosphate + ATP = a 2'-deoxyribonucleoside 5'-triphosphate + ADP. It catalyses the reaction a ribonucleoside 5'-diphosphate + ATP = a ribonucleoside 5'-triphosphate + ADP. Major role in the synthesis of nucleoside triphosphates other than ATP. The ATP gamma phosphate is transferred to the NDP beta phosphate via a ping-pong mechanism, using a phosphorylated active-site intermediate. Shows the highest specificity towards GDP. The chain is Nucleoside diphosphate kinase III, chloroplastic/mitochondrial (NDPK3) from Arabidopsis thaliana (Mouse-ear cress).